The following is a 65-amino-acid chain: Large ribosomal subunit protein bL35 (65 aa).

The protein belongs to the bacterial ribosomal protein bL35 family.

This chain is Large ribosomal subunit protein bL35, found in Buchnera aphidicola subsp. Acyrthosiphon pisum (strain 5A).